Reading from the N-terminus, the 149-residue chain is MSAKAKILLVNGPNLNLLGRREPGHYGHHTLDSIVQNMKNTANSADVELEHIQSNAEHELIDAIHSTDANFIIINPAAFTHTSVAIRDAILGVAIPFIEVHLSNVHAREPFRHHSYFSDKAVGVICGLGADGYQFALKSAINRLQGPSA.

Tyrosine 26 (proton acceptor) is an active-site residue. Substrate-binding residues include asparagine 75, histidine 81, and aspartate 88. Histidine 101 serves as the catalytic Proton donor. Residues leucine 102 to serine 103 and arginine 112 contribute to the substrate site.

Belongs to the type-II 3-dehydroquinase family. In terms of assembly, homododecamer.

The enzyme catalyses 3-dehydroquinate = 3-dehydroshikimate + H2O. The protein operates within metabolic intermediate biosynthesis; chorismate biosynthesis; chorismate from D-erythrose 4-phosphate and phosphoenolpyruvate: step 3/7. In terms of biological role, catalyzes a trans-dehydration via an enolate intermediate. In Shewanella woodyi (strain ATCC 51908 / MS32), this protein is 3-dehydroquinate dehydratase.